Reading from the N-terminus, the 233-residue chain is Purine nucleoside phosphorylase DeoD-type (233 aa).

Residue His4 participates in a purine D-ribonucleoside binding. Residues Gly20, Arg24, Arg43, and 87–90 (RVGT) contribute to the phosphate site. Residues Glu162, 179–181 (EME), and 203–204 (SD) contribute to the a purine D-ribonucleoside site. Asp204 functions as the Proton donor in the catalytic mechanism.

This sequence belongs to the PNP/UDP phosphorylase family. As to quaternary structure, homohexamer; trimer of homodimers.

The catalysed reaction is a purine D-ribonucleoside + phosphate = a purine nucleobase + alpha-D-ribose 1-phosphate. It catalyses the reaction a purine 2'-deoxy-D-ribonucleoside + phosphate = a purine nucleobase + 2-deoxy-alpha-D-ribose 1-phosphate. Functionally, catalyzes the reversible phosphorolytic breakdown of the N-glycosidic bond in the beta-(deoxy)ribonucleoside molecules, with the formation of the corresponding free purine bases and pentose-1-phosphate. The chain is Purine nucleoside phosphorylase DeoD-type from Alkaliphilus metalliredigens (strain QYMF).